A 200-amino-acid polypeptide reads, in one-letter code: Transcriptional repressor NrdR (200 aa).

A zinc finger lies at 3 to 34 (CPRCGKQEIRVLESRSAEGGQSVRRRRECMSC). An ATP-cone domain is found at 49–139 (IMVIKRDGSR…VYRKFQGIKD (91 aa)). Residues 158–200 (LERPLRNSPPSESESTASPDWVGGIPQLLDQNDTSSNLSEIPK) form a disordered region. Residues 186–200 (LDQNDTSSNLSEIPK) show a composition bias toward polar residues.

This sequence belongs to the NrdR family. It depends on Zn(2+) as a cofactor.

Functionally, negatively regulates transcription of bacterial ribonucleotide reductase nrd genes and operons by binding to NrdR-boxes. This Synechococcus sp. (strain JA-3-3Ab) (Cyanobacteria bacterium Yellowstone A-Prime) protein is Transcriptional repressor NrdR.